Consider the following 525-residue polypeptide: 2,3-bisphosphoglycerate-independent phosphoglycerate mutase (525 aa).

Mn(2+) is bound by residues D18 and S68. S68 functions as the Phosphoserine intermediate in the catalytic mechanism. Residues H129, 159–160 (RD), R194, R200, 269–272 (RADR), and K345 contribute to the substrate site. Mn(2+)-binding residues include D413, H417, D454, H455, and H473.

The protein belongs to the BPG-independent phosphoglycerate mutase family. In terms of assembly, monomer. Mn(2+) is required as a cofactor.

It catalyses the reaction (2R)-2-phosphoglycerate = (2R)-3-phosphoglycerate. The protein operates within carbohydrate degradation; glycolysis; pyruvate from D-glyceraldehyde 3-phosphate: step 3/5. Catalyzes the interconversion of 2-phosphoglycerate and 3-phosphoglycerate. The chain is 2,3-bisphosphoglycerate-independent phosphoglycerate mutase from Chromohalobacter salexigens (strain ATCC BAA-138 / DSM 3043 / CIP 106854 / NCIMB 13768 / 1H11).